Reading from the N-terminus, the 469-residue chain is Neuraminidase (469 aa).

At 1–12 (MNTNQRIITIGT) the chain is on the intravirion side. An involved in apical transport and lipid raft association region spans residues 11 to 33 (GTICLIVGIISLLLQIGNIILLW). The helical transmembrane segment at 13–33 (ICLIVGIISLLLQIGNIILLW) threads the bilayer. Over 34 to 469 (MSHSIQTGEK…GADLPFTIDK (436 aa)) the chain is Virion surface. A hypervariable stalk region region spans residues 36-90 (HSIQTGEKSHPKVCNQSVITYENNTWVNQTYVNISNTNIAAGQGVTPIILAGNSS). Residues Asn-50, Asn-58, Asn-63, Asn-68, and Asn-88 are each glycosylated (N-linked (GlcNAc...) asparagine; by host). The tract at residues 91 to 469 (LCPISGWAIY…GADLPFTIDK (379 aa)) is head of neuraminidase. Intrachain disulfides connect Cys-92/Cys-417, Cys-124/Cys-129, Cys-184/Cys-231, Cys-233/Cys-238, Cys-279/Cys-292, Cys-281/Cys-290, Cys-318/Cys-335, and Cys-421/Cys-446. Residue Arg-118 participates in substrate binding. An N-linked (GlcNAc...) asparagine; by host glycan is attached at Asn-146. The active-site Proton donor/acceptor is Asp-151. Arg-152 lines the substrate pocket. Asn-235 is a glycosylation site (N-linked (GlcNAc...) asparagine; by host). Residue 277-278 (EE) coordinates substrate. A substrate-binding site is contributed by Arg-293. Ca(2+) is bound by residues Asp-294, Asp-324, and Asn-344. Arg-368 is a substrate binding site. Catalysis depends on Tyr-402, which acts as the Nucleophile.

It belongs to the glycosyl hydrolase 34 family. As to quaternary structure, homotetramer. It depends on Ca(2+) as a cofactor. Post-translationally, N-glycosylated.

The protein resides in the virion membrane. The protein localises to the host apical cell membrane. The catalysed reaction is Hydrolysis of alpha-(2-&gt;3)-, alpha-(2-&gt;6)-, alpha-(2-&gt;8)- glycosidic linkages of terminal sialic acid residues in oligosaccharides, glycoproteins, glycolipids, colominic acid and synthetic substrates.. With respect to regulation, inhibited by the neuraminidase inhibitors zanamivir (Relenza) and oseltamivir (Tamiflu). These drugs interfere with the release of progeny virus from infected cells and are effective against all influenza strains. Resistance to neuraminidase inhibitors is quite rare. Its function is as follows. Catalyzes the removal of terminal sialic acid residues from viral and cellular glycoconjugates. Cleaves off the terminal sialic acids on the glycosylated HA during virus budding to facilitate virus release. Additionally helps virus spread through the circulation by further removing sialic acids from the cell surface. These cleavages prevent self-aggregation and ensure the efficient spread of the progeny virus from cell to cell. Otherwise, infection would be limited to one round of replication. Described as a receptor-destroying enzyme because it cleaves a terminal sialic acid from the cellular receptors. May facilitate viral invasion of the upper airways by cleaving the sialic acid moieties on the mucin of the airway epithelial cells. Likely to plays a role in the budding process through its association with lipid rafts during intracellular transport. May additionally display a raft-association independent effect on budding. Plays a role in the determination of host range restriction on replication and virulence. Sialidase activity in late endosome/lysosome traffic seems to enhance virus replication. This is Neuraminidase from Influenza A virus (strain A/New Jersey/8/1976 H1N1).